The following is a 359-amino-acid chain: tRNA-specific 2-thiouridylase MnmA (359 aa).

ATP is bound by residues 6-13 (AMSGGVDS) and Leu-32. Cys-97 (nucleophile) is an active-site residue. Residues Cys-97 and Cys-195 are joined by a disulfide bond. Position 121 (Gly-121) interacts with ATP. The segment at 144-146 (KDQ) is interaction with tRNA. The active-site Cysteine persulfide intermediate is the Cys-195.

Belongs to the MnmA/TRMU family.

It is found in the cytoplasm. It carries out the reaction S-sulfanyl-L-cysteinyl-[protein] + uridine(34) in tRNA + AH2 + ATP = 2-thiouridine(34) in tRNA + L-cysteinyl-[protein] + A + AMP + diphosphate + H(+). Catalyzes the 2-thiolation of uridine at the wobble position (U34) of tRNA, leading to the formation of s(2)U34. The chain is tRNA-specific 2-thiouridylase MnmA from Tropheryma whipplei (strain Twist) (Whipple's bacillus).